A 789-amino-acid polypeptide reads, in one-letter code: SWI5-dependent HO expression protein 4 (789 aa).

Phosphoserine is present on Ser18.

It localises to the cytoplasm. Required for mother cell-specific ho expression. Might be required for the transport of factors (such as ASH1) that promote HO repression from the mother cell into its bud. The protein is SWI5-dependent HO expression protein 4 (SHE4) of Saccharomyces cerevisiae (strain ATCC 204508 / S288c) (Baker's yeast).